A 111-amino-acid chain; its full sequence is Putative G antigen family E member 3 (111 aa).

The tract at residues M1–D67 is disordered. Residues R8–V24 show a composition bias toward polar residues. T97 carries the phosphothreonine modification.

The protein belongs to the GAGE family.

This is Putative G antigen family E member 3 (PAGE2B) from Homo sapiens (Human).